The primary structure comprises 313 residues: Glutathionyl-hydroquinone reductase PcpF (313 aa).

The Nucleophile role is filled by Cys53. Residues Trp86, 119–122 (RVTI), and 137–138 (ES) contribute to the glutathione site. The region spanning 161-285 (PAEFRPEIDR…INLRHAKAHY (125 aa)) is the GST C-terminal domain. Residue Tyr184 is the Proton donor/acceptor of the active site.

Belongs to the GST superfamily. Xi-class GSH transferase family. In terms of assembly, homodimer.

It carries out the reaction 2-(glutathione-S-yl)-hydroquinone + glutathione = hydroquinone + glutathione disulfide. Its function is as follows. Catalyzes glutathione (GSH)-dependent reduction of glutathionyl-hydroquinones (GS-HQs) to the corresponding hydroquinones. Can act on halogenated substrates such as GS-2,6-dichloro-p-hydroquinone (GS-DiCH) and GS-trichloro-p-hydroquinone (GS-TriCH). Involved in the degradation of pentachlorophenol (PCP), a toxic pollutant. The chain is Glutathionyl-hydroquinone reductase PcpF from Sphingobium chlorophenolicum.